The chain runs to 306 residues: 5'-hydroxyaverantin dehydrogenase (306 aa).

The NADP(+) site is built by serine 25, isoleucine 27, glutamine 48, lysine 52, and aspartate 73. The Proton donor role is filled by serine 173. The NADP(+) site is built by tyrosine 187, lysine 191, valine 220, and threonine 222. Tyrosine 187 acts as the Proton acceptor in catalysis. Residue lysine 191 is the Lowers pKa of active site Tyr of the active site.

The protein belongs to the short-chain dehydrogenases/reductases (SDR) family. In terms of assembly, homodimer.

The protein localises to the cytoplasm. It is found in the cytosol. It catalyses the reaction (1'S,5'S)-5'-hydroxyaverantin + NAD(+) = (S)-5'-oxoaverantin + NADH + H(+). It carries out the reaction (1'S,5'R)-5'-hydroxyaverantin + NAD(+) = (S)-5'-oxoaverantin + NADH + 2 H(+). Its pathway is mycotoxin biosynthesis. In terms of biological role, 5'-hydroxyaverantin dehydrogenase; part of the fragmented gene cluster that mediates the biosynthesis of dothistromin (DOTH), a polyketide toxin very similar in structure to the aflatoxin precursor, versicolorin B. The first step of the pathway is the conversion of acetate to norsolorinic acid (NOR) and requires the fatty acid synthase subunits hexA and hexB, as well as the polyketide synthase pksA. PksA combines a hexanoyl starter unit and 7 malonyl-CoA extender units to synthesize the precursor NOR. The hexanoyl starter unit is provided to the acyl-carrier protein (ACP) domain by the fungal fatty acid synthase hexA/hexB. The second step is the conversion of NOR to averantin (AVN) and requires the norsolorinic acid ketoreductase nor1, which catalyzes the dehydration of norsolorinic acid to form (1'S)-averantin. The cytochrome P450 monooxygenase avnA then catalyzes the hydroxylation of AVN to 5'hydroxyaverantin (HAVN). The next step is performed by adhA that transforms HAVN to averufin (AVF). Averufin might then be converted to hydroxyversicolorone by cypX and avfA. Hydroxyversicolorone is further converted versiconal hemiacetal acetate (VHA) by moxY. VHA is then the substrate for the versiconal hemiacetal acetate esterase est1 to yield versiconal (VAL). Versicolorin B synthase vbsA then converts VAL to versicolorin B (VERB) by closing the bisfuran ring. Then, the activity of the versicolorin B desaturase verB leads to versicolorin A (VERA). DotB, a predicted chloroperoxidase, may perform epoxidation of the A-ring of VERA. Alternatively, a cytochrome P450, such as cypX or avnA could catalyze this step. It is also possible that another, uncharacterized, cytochrome P450 enzyme is responsible for this step. Opening of the epoxide could potentially be achieved by the epoxide hydrolase epoA. However, epoA seems not to be required for DOTH biosynthesis, but other epoxide hydrolases may have the ability to complement this hydrolysis. Alternatively, opening of the epoxide ring could be achieved non-enzymatically. The next step is the deoxygenation of ring A to yield the 5,8-dihydroxyanthraquinone which is most likely catalyzed by the NADPH dehydrogenase encoded by ver1. The last stages of DOTH biosynthesis are proposed to involve hydroxylation of the bisfuran. OrdB and norB might have oxidative roles here. An alternative possibility is that cytochrome P450 monoogenases such as avnA and cypX might perform these steps in addition to previously proposed steps. This Dothistroma septosporum (strain NZE10 / CBS 128990) (Red band needle blight fungus) protein is 5'-hydroxyaverantin dehydrogenase.